Reading from the N-terminus, the 285-residue chain is Dihydropteroate synthase (285 aa).

Residues 18–276 (PKIMGIVNLT…DVKATADALK (259 aa)) form the Pterin-binding domain. Asn25 serves as a coordination point for Mg(2+). Residues Thr66, Asp99, Asn119, Asp190, Lys229, and 264-266 (RVH) contribute to the (7,8-dihydropterin-6-yl)methyl diphosphate site.

This sequence belongs to the DHPS family. As to quaternary structure, homodimer. Mg(2+) is required as a cofactor.

It carries out the reaction (7,8-dihydropterin-6-yl)methyl diphosphate + 4-aminobenzoate = 7,8-dihydropteroate + diphosphate. It functions in the pathway cofactor biosynthesis; tetrahydrofolate biosynthesis; 7,8-dihydrofolate from 2-amino-4-hydroxy-6-hydroxymethyl-7,8-dihydropteridine diphosphate and 4-aminobenzoate: step 1/2. In terms of biological role, catalyzes the condensation of para-aminobenzoate (pABA) with 6-hydroxymethyl-7,8-dihydropterin diphosphate (DHPt-PP) to form 7,8-dihydropteroate (H2Pte), the immediate precursor of folate derivatives. This Neisseria meningitidis serogroup B (strain ATCC BAA-335 / MC58) protein is Dihydropteroate synthase (folP).